The sequence spans 527 residues: Bifunctional purine biosynthesis protein PurH (527 aa).

In terms of domain architecture, MGS-like spans 8–156 (AGAKRPIRRA…KNHPSVAVVV (149 aa)).

This sequence belongs to the PurH family.

It catalyses the reaction (6R)-10-formyltetrahydrofolate + 5-amino-1-(5-phospho-beta-D-ribosyl)imidazole-4-carboxamide = 5-formamido-1-(5-phospho-D-ribosyl)imidazole-4-carboxamide + (6S)-5,6,7,8-tetrahydrofolate. It carries out the reaction IMP + H2O = 5-formamido-1-(5-phospho-D-ribosyl)imidazole-4-carboxamide. The protein operates within purine metabolism; IMP biosynthesis via de novo pathway; 5-formamido-1-(5-phospho-D-ribosyl)imidazole-4-carboxamide from 5-amino-1-(5-phospho-D-ribosyl)imidazole-4-carboxamide (10-formyl THF route): step 1/1. Its pathway is purine metabolism; IMP biosynthesis via de novo pathway; IMP from 5-formamido-1-(5-phospho-D-ribosyl)imidazole-4-carboxamide: step 1/1. This Mycobacterium sp. (strain KMS) protein is Bifunctional purine biosynthesis protein PurH.